The following is a 264-amino-acid chain: 3-methyl-2-oxobutanoate hydroxymethyltransferase (264 aa).

Asp-45 and Asp-84 together coordinate Mg(2+). 3-methyl-2-oxobutanoate-binding positions include 45-46, Asp-84, and Lys-112; that span reads DS. Glu-114 contributes to the Mg(2+) binding site. The Proton acceptor role is filled by Glu-181.

It belongs to the PanB family. In terms of assembly, homodecamer; pentamer of dimers. It depends on Mg(2+) as a cofactor.

It is found in the cytoplasm. It carries out the reaction 3-methyl-2-oxobutanoate + (6R)-5,10-methylene-5,6,7,8-tetrahydrofolate + H2O = 2-dehydropantoate + (6S)-5,6,7,8-tetrahydrofolate. It participates in cofactor biosynthesis; (R)-pantothenate biosynthesis; (R)-pantoate from 3-methyl-2-oxobutanoate: step 1/2. Its function is as follows. Catalyzes the reversible reaction in which hydroxymethyl group from 5,10-methylenetetrahydrofolate is transferred onto alpha-ketoisovalerate to form ketopantoate. In Vibrio vulnificus (strain YJ016), this protein is 3-methyl-2-oxobutanoate hydroxymethyltransferase.